The primary structure comprises 244 residues: tRNA (guanine-N(7)-)-methyltransferase (244 aa).

The S-adenosyl-L-methionine site is built by Glu75, Glu100, Asp127, and Asp150. The active site involves Asp150. Residues Lys154, Asp186, and 223–226 contribute to the substrate site; that span reads TRFE.

Belongs to the class I-like SAM-binding methyltransferase superfamily. TrmB family.

It catalyses the reaction guanosine(46) in tRNA + S-adenosyl-L-methionine = N(7)-methylguanosine(46) in tRNA + S-adenosyl-L-homocysteine. Its pathway is tRNA modification; N(7)-methylguanine-tRNA biosynthesis. Its function is as follows. Catalyzes the formation of N(7)-methylguanine at position 46 (m7G46) in tRNA. The protein is tRNA (guanine-N(7)-)-methyltransferase of Xylella fastidiosa (strain M12).